Here is a 1202-residue protein sequence, read N- to C-terminus: DNA-directed RNA polymerase subunit beta (1202 aa).

The span at 1151–1162 shows a compositional bias: acidic residues; that stretch reads LRDMDEEDDDVV. A disordered region spans residues 1151–1202; sequence LRDMDEEDDDVVNVDALSKYAEKQNEKTNASAEEAKAPSTESAPVETKNNQN. Residues 1189-1202 are compositionally biased toward polar residues; it reads STESAPVETKNNQN.

It belongs to the RNA polymerase beta chain family. In terms of assembly, the RNAP catalytic core consists of 2 alpha, 1 beta, 1 beta' and 1 omega subunit. When a sigma factor is associated with the core the holoenzyme is formed, which can initiate transcription.

The enzyme catalyses RNA(n) + a ribonucleoside 5'-triphosphate = RNA(n+1) + diphosphate. Its function is as follows. DNA-dependent RNA polymerase catalyzes the transcription of DNA into RNA using the four ribonucleoside triphosphates as substrates. This Pediococcus pentosaceus (strain ATCC 25745 / CCUG 21536 / LMG 10740 / 183-1w) protein is DNA-directed RNA polymerase subunit beta.